Reading from the N-terminus, the 257-residue chain is Imidazole glycerol phosphate synthase subunit HisF (257 aa).

Catalysis depends on residues Asp-11 and Asp-130.

The protein belongs to the HisA/HisF family. As to quaternary structure, heterodimer of HisH and HisF.

Its subcellular location is the cytoplasm. The catalysed reaction is 5-[(5-phospho-1-deoxy-D-ribulos-1-ylimino)methylamino]-1-(5-phospho-beta-D-ribosyl)imidazole-4-carboxamide + L-glutamine = D-erythro-1-(imidazol-4-yl)glycerol 3-phosphate + 5-amino-1-(5-phospho-beta-D-ribosyl)imidazole-4-carboxamide + L-glutamate + H(+). It participates in amino-acid biosynthesis; L-histidine biosynthesis; L-histidine from 5-phospho-alpha-D-ribose 1-diphosphate: step 5/9. In terms of biological role, IGPS catalyzes the conversion of PRFAR and glutamine to IGP, AICAR and glutamate. The HisF subunit catalyzes the cyclization activity that produces IGP and AICAR from PRFAR using the ammonia provided by the HisH subunit. The sequence is that of Imidazole glycerol phosphate synthase subunit HisF from Shewanella baltica (strain OS223).